Consider the following 276-residue polypeptide: Kallikrein-11 (276 aa).

Positions 1–44 (MRRLKSDWKLSTETREPGARPALLQARMILRLIALALVTGHVGG) are cleaved as a signal peptide. The propeptide at 45-47 (ETR) is activation peptide. The 227-residue stretch at 48–274 (IIKGYECRPH…YFNWIHEVMR (227 aa)) folds into the Peptidase S1 domain. Intrachain disulfides connect cysteine 54–cysteine 189, cysteine 73–cysteine 89, cysteine 168–cysteine 235, cysteine 200–cysteine 214, and cysteine 225–cysteine 250. Histidine 88 serves as the catalytic Charge relay system. N-linked (GlcNAc...) asparagine glycosylation occurs at asparagine 125. Aspartate 136 (charge relay system) is an active-site residue. N-linked (GlcNAc...) asparagine glycosylation is found at asparagine 191 and asparagine 207. The active-site Charge relay system is serine 229. Asparagine 236 carries N-linked (GlcNAc...) asparagine glycosylation.

It belongs to the peptidase S1 family. Kallikrein subfamily. As to expression, expressed in brain and prostate (isoform 1) and prostate (isoform 2).

It is found in the secreted. In terms of biological role, possible multifunctional protease. Efficiently cleaves 'bz-Phe-Arg-4-methylcoumaryl-7-amide', a kallikrein substrate, and weakly cleaves other substrates for kallikrein and trypsin. The polypeptide is Kallikrein-11 (Klk11) (Mus musculus (Mouse)).